The chain runs to 333 residues: BRISC and BRCA1-A complex member 1 (333 aa).

Position 1 is an N-acetylmethionine (Met-1). Residues 1 to 85 (MEVAEANSPT…PWQVPASASE (85 aa)) are disordered. Ser-8 carries the post-translational modification Phosphoserine. Over residues 10–24 (TEEEEEEEEEGEETI) the composition is skewed to acidic residues. 2 positions are modified to phosphoserine: Ser-33 and Ser-53. Residues 58–67 (EAATADGGAA) are compositionally biased toward low complexity. Residues 99–302 (VIICLDLSEE…LELHNCMAKL (204 aa)) form a VWFA-like region.

This sequence belongs to the BABAM1 family. Component of the ARISC complex, at least composed of UIMC1/RAP80, ABRAXAS1, BRCC3/BRCC36, BABAM2 and BABAM1/NBA1. Component of the BRCA1-A complex, at least composed of BRCA1, BARD1, UIMC1/RAP80, ABRAXAS1, BRCC3/BRCC36, BABAM2 and BABAM1/NBA1. In the BRCA1-A complex, interacts directly with ABRAXAS1 and BABAM2. Component of the BRISC complex, at least composed of ABRAXAS2, BRCC3/BRCC36, BABAM2 and BABAM1/NBA1. Identified in a complex with SHMT2 and the other subunits of the BRISC complex.

The protein localises to the cytoplasm. The protein resides in the nucleus. Functionally, component of the BRCA1-A complex, a complex that specifically recognizes 'Lys-63'-linked ubiquitinated histones H2A and H2AX at DNA lesions sites, leading to target the BRCA1-BARD1 heterodimer to sites of DNA damage at double-strand breaks (DSBs). The BRCA1-A complex also possesses deubiquitinase activity that specifically removes 'Lys-63'-linked ubiquitin on histones H2A and H2AX. In the BRCA1-A complex, it is required for the complex integrity and its localization at DSBs. Component of the BRISC complex, a multiprotein complex that specifically cleaves 'Lys-63'-linked ubiquitin in various substrates. In these 2 complexes, it is probably required to maintain the stability of BABAM2 and help the 'Lys-63'-linked deubiquitinase activity mediated by BRCC3/BRCC36 component. The BRISC complex is required for normal mitotic spindle assembly and microtubule attachment to kinetochores via its role in deubiquitinating NUMA1. Plays a role in interferon signaling via its role in the deubiquitination of the interferon receptor IFNAR1; deubiquitination increases IFNAR1 activity by enhancing its stability and cell surface expression. Down-regulates the response to bacterial lipopolysaccharide (LPS) via its role in IFNAR1 deubiquitination. This chain is BRISC and BRCA1-A complex member 1 (Babam1), found in Mus musculus (Mouse).